The primary structure comprises 341 residues: tRNA N6-adenosine threonylcarbamoyltransferase (341 aa).

Residues His111 and His115 each contribute to the Fe cation site. Substrate contacts are provided by residues Leu134–Gly138, Asp167, Gly180, and Asn276. Asp304 is a binding site for Fe cation.

Belongs to the KAE1 / TsaD family. Fe(2+) serves as cofactor.

It localises to the cytoplasm. The catalysed reaction is L-threonylcarbamoyladenylate + adenosine(37) in tRNA = N(6)-L-threonylcarbamoyladenosine(37) in tRNA + AMP + H(+). Required for the formation of a threonylcarbamoyl group on adenosine at position 37 (t(6)A37) in tRNAs that read codons beginning with adenine. Is involved in the transfer of the threonylcarbamoyl moiety of threonylcarbamoyl-AMP (TC-AMP) to the N6 group of A37, together with TsaE and TsaB. TsaD likely plays a direct catalytic role in this reaction. The polypeptide is tRNA N6-adenosine threonylcarbamoyltransferase (Pseudomonas putida (strain W619)).